Consider the following 215-residue polypeptide: MSEAKRLAAEKAIEYVEDGMIVGVGTGSTVAYFIDALARIQHRIKGAVSSSEQSTARLKQHGIEVIELNHSGNLSLYVDGADECDANKCLIKGGGAALTREKIIAEASERFICIVDPSKQVPVLGKFPLPVEVIPMARSLIARQIRDMTGGQPTWREGVVTDNGNQILDIHNLQITDPEKLERELNQLPGVVCVGLFARRRADVVIVGGEPPVVL.

Substrate-binding positions include 26-29 (TGST), 79-82 (DGAD), and 92-95 (KGGG). Glu-101 functions as the Proton acceptor in the catalytic mechanism. A substrate-binding site is contributed by Lys-119.

Belongs to the ribose 5-phosphate isomerase family. Homodimer.

The enzyme catalyses aldehydo-D-ribose 5-phosphate = D-ribulose 5-phosphate. Its pathway is carbohydrate degradation; pentose phosphate pathway; D-ribose 5-phosphate from D-ribulose 5-phosphate (non-oxidative stage): step 1/1. In terms of biological role, catalyzes the reversible conversion of ribose-5-phosphate to ribulose 5-phosphate. This is Ribose-5-phosphate isomerase A from Stenotrophomonas maltophilia (strain R551-3).